A 298-amino-acid chain; its full sequence is Probable D,D-dipeptide transport system permease protein DdpC (298 aa).

At M1–T33 the chain is on the cytoplasmic side. Residues V34 to A54 form a helical membrane-spanning segment. Topologically, residues T55–S96 are periplasmic. The helical transmembrane segment at I97–L117 threads the bilayer. The ABC transmembrane type-1 domain occupies I97–G282. The Cytoplasmic portion of the chain corresponds to S118 to R124. 2 helical membrane-spanning segments follow: residues A125 to T145 and M146 to V166. At R167–Q217 the chain is on the cytoplasmic side. Residues A218–G238 traverse the membrane as a helical segment. Residues A239 to Q260 lie on the Periplasmic side of the membrane. A helical transmembrane segment spans residues W261–F281. Over G282–S298 the chain is Cytoplasmic.

The protein belongs to the binding-protein-dependent transport system permease family. OppBC subfamily. As to quaternary structure, the complex is composed of two ATP-binding proteins (DdpD and DdpF), two transmembrane proteins (DdpB and DdpC) and a solute-binding protein (DdpA).

It localises to the cell inner membrane. In terms of biological role, part of the ABC transporter complex DdpABCDF, which is probably involved in D,D-dipeptide transport. Probably responsible for the translocation of the substrate across the membrane. This chain is Probable D,D-dipeptide transport system permease protein DdpC (ddpC), found in Escherichia coli (strain K12).